The chain runs to 128 residues: Large ribosomal subunit protein eL8 (128 aa).

It belongs to the eukaryotic ribosomal protein eL8 family. As to quaternary structure, part of the 50S ribosomal subunit. Probably part of the RNase P complex.

It is found in the cytoplasm. Functionally, multifunctional RNA-binding protein that recognizes the K-turn motif in ribosomal RNA, the RNA component of RNase P, box H/ACA, box C/D and box C'/D' sRNAs. The protein is Large ribosomal subunit protein eL8 of Nitrosopumilus maritimus (strain SCM1).